The sequence spans 1295 residues: Phosphoribosylformylglycinamidine synthase (1295 aa).

Positions 305-327 (WPGAATGSGGEIRDEGATGRGAK) are disordered. ATP-binding positions include 307 to 318 (GAATGSGGEIRD) and Ala-678. Mg(2+) contacts are provided by Glu-718, Asn-722, and Asp-884. Ser-886 is an ATP binding site. In terms of domain architecture, Glutamine amidotransferase type-1 spans 1042-1295 (VAVLREQGVN…IFRNARKQLG (254 aa)). The Nucleophile role is filled by Cys-1135. Residues His-1260 and Glu-1262 contribute to the active site.

This sequence in the N-terminal section; belongs to the FGAMS family. In terms of assembly, monomer.

The protein localises to the cytoplasm. The catalysed reaction is N(2)-formyl-N(1)-(5-phospho-beta-D-ribosyl)glycinamide + L-glutamine + ATP + H2O = 2-formamido-N(1)-(5-O-phospho-beta-D-ribosyl)acetamidine + L-glutamate + ADP + phosphate + H(+). It participates in purine metabolism; IMP biosynthesis via de novo pathway; 5-amino-1-(5-phospho-D-ribosyl)imidazole from N(2)-formyl-N(1)-(5-phospho-D-ribosyl)glycinamide: step 1/2. Its function is as follows. Phosphoribosylformylglycinamidine synthase involved in the purines biosynthetic pathway. Catalyzes the ATP-dependent conversion of formylglycinamide ribonucleotide (FGAR) and glutamine to yield formylglycinamidine ribonucleotide (FGAM) and glutamate. The chain is Phosphoribosylformylglycinamidine synthase from Escherichia coli (strain UTI89 / UPEC).